We begin with the raw amino-acid sequence, 93 residues long: Neurophysin 1 (93 aa).

7 disulfide bridges follow: C10–C54, C13–C27, C21–C44, C28–C34, C61–C74, C68–C86, and C75–C80.

Belongs to the vasopressin/oxytocin family.

The protein localises to the secreted. Neurophysin 1 specifically binds oxytocin. This chain is Neurophysin 1, found in Anser anser anser (Western greylag goose).